The primary structure comprises 150 residues: Azurin (150 aa).

A signal peptide spans 1 to 21; it reads MFKQVLGGMALMAAFSAPVLA. One can recognise a Plastocyanin-like domain in the interval 22–150; it reads AECSVDIAGT…LMKGTLKLVD (129 aa). An intrachain disulfide couples C24 to C47. Residues H67, C133, H138, and M142 each contribute to the Cu cation site.

It is found in the periplasm. In Bordetella bronchiseptica (strain ATCC BAA-588 / NCTC 13252 / RB50) (Alcaligenes bronchisepticus), this protein is Azurin.